The primary structure comprises 525 residues: Glycoprotein (525 aa).

An N-terminal signal peptide occupies residues 1-17 (MASYFALVLNGISMVFS). The Virion surface portion of the chain corresponds to 18–459 (QGLFPLYTIP…DLGLSDWKRY (442 aa)). N-linked (GlcNAc...) asparagine; by host glycosylation is found at N221 and N338. Residues 460–480 (LLIGSLAVGGVVAILFIGTCC) traverse the membrane as a helical segment. The S-palmitoyl cysteine; by host moiety is linked to residue C480. At 481–525 (LRCRAGRNRRTIRSNHRSLSHDVVFHKDKDKVITSWESYKGQTAQ) the chain is on the intravirion side.

This sequence belongs to the lyssavirus glycoprotein family. In terms of assembly, homotrimer. Interacts with matrix protein. Post-translationally, glycosylated and palmitoylated by host. Glycosylation is crucial for glycoprotein export at the cell surface.

Its subcellular location is the virion membrane. Its function is as follows. Attaches the virus to host cellular receptor, inducing endocytosis of the virion. In the endosome, the acidic pH induces conformational changes in the glycoprotein trimer, which trigger fusion between virus and cell membrane. There is convincing in vitro evidence that the muscular form of the nicotinic acetylcholine receptor (nAChR), the neuronal cell adhesion molecule (NCAM), and the p75 neurotrophin receptor (p75NTR) bind glycoprotein and thereby facilitate rabies virus entry into cells. The protein is Glycoprotein (G) of Miniopterus schreibersii (Schreibers's long-fingered bat).